A 74-amino-acid polypeptide reads, in one-letter code: U3-agatoxin-Ao1h (74 aa).

A signal peptide spans 1 to 20 (MRAIISLLLISTMVFGVIEA). A propeptide spanning residues 21–34 (VSVQKSLKIFEGER) is cleaved from the precursor. Disulfide bonds link Cys-37/Cys-53, Cys-44/Cys-58, Cys-52/Cys-68, and Cys-60/Cys-66. The residue at position 72 (Asn-72) is an Asparagine amide.

This sequence belongs to the neurotoxin 07 (Beta/delta-agtx) family. 03 (aga-4) subfamily. Aga sub-subfamily. As to expression, expressed by the venom gland.

It localises to the secreted. Insecticidal neurotoxin that induces an irreversible spastic paralysis when injected into insects. Modifies presynaptic voltage-gated sodium channels (Nav), causing them to open at the normal resting potential of the nerve. This leads to spontaneous release of neurotransmitter and repetitive action potentials in motor neurons. This chain is U3-agatoxin-Ao1h, found in Agelena orientalis (Funnel-web spider).